Reading from the N-terminus, the 498-residue chain is Lysine--tRNA ligase (498 aa).

2 residues coordinate Mg(2+): Glu407 and Glu414.

Belongs to the class-II aminoacyl-tRNA synthetase family. Homodimer. Mg(2+) is required as a cofactor.

The protein resides in the cytoplasm. It catalyses the reaction tRNA(Lys) + L-lysine + ATP = L-lysyl-tRNA(Lys) + AMP + diphosphate. The sequence is that of Lysine--tRNA ligase from Rhizobium etli (strain ATCC 51251 / DSM 11541 / JCM 21823 / NBRC 15573 / CFN 42).